Here is a 383-residue protein sequence, read N- to C-terminus: MKQAFNQRIRSALNQRKQAGLNRSRRVVSQGNQATLVVDGKSYLNFSGNDYLGLASSKELMEAWQEGLSLYGSGSGASPLVTGYSKPHANLESQLAEWLGFDCAILFNSGFSANQAVLFSLLEKGDTLLQDKLNHASLMEAGMLSPAVMKRFKHNDVGHLKSLLKRSSDEPTLVVTEGVFSMDGDLSPLADIATLTKENDAWLMVDDAHGCGVLGSNGKGCCDVHSITPDILIVTFGKGFGLSGAAVLCNQECGDYLSQFARHHVYSTAMPPAQAHALSHALLMIQQQEWRRDKLKELNQQFESELMNFVGAEKTPTPIKPIIIGEATDAMILADSLKERGLWTTAIRPPTVPVSSARIRVTLSANHSSADISALTQAINELG.

Arginine 23 is a binding site for substrate. Residue 110–111 (GF) coordinates pyridoxal 5'-phosphate. Position 135 (histidine 135) interacts with substrate. The pyridoxal 5'-phosphate site is built by serine 181, histidine 209, and threonine 235. N6-(pyridoxal phosphate)lysine is present on lysine 238. Threonine 351 serves as a coordination point for substrate.

Belongs to the class-II pyridoxal-phosphate-dependent aminotransferase family. BioF subfamily. Homodimer. Pyridoxal 5'-phosphate is required as a cofactor.

The enzyme catalyses 6-carboxyhexanoyl-[ACP] + L-alanine + H(+) = (8S)-8-amino-7-oxononanoate + holo-[ACP] + CO2. Its pathway is cofactor biosynthesis; biotin biosynthesis. In terms of biological role, catalyzes the decarboxylative condensation of pimeloyl-[acyl-carrier protein] and L-alanine to produce 8-amino-7-oxononanoate (AON), [acyl-carrier protein], and carbon dioxide. The protein is 8-amino-7-oxononanoate synthase of Aliivibrio fischeri (strain MJ11) (Vibrio fischeri).